A 123-amino-acid chain; its full sequence is Small ribosomal subunit protein uS12 (123 aa).

Positions 1–30 (MPTIQQLVRKGRQDKVEKNKTPALEGSPQR) are disordered. A compositionally biased stretch (basic and acidic residues) spans 11–20 (GRQDKVEKNK). 3-methylthioaspartic acid is present on Asp89.

This sequence belongs to the universal ribosomal protein uS12 family. Part of the 30S ribosomal subunit. Contacts proteins S8 and S17. May interact with IF1 in the 30S initiation complex.

Its function is as follows. With S4 and S5 plays an important role in translational accuracy. In terms of biological role, interacts with and stabilizes bases of the 16S rRNA that are involved in tRNA selection in the A site and with the mRNA backbone. Located at the interface of the 30S and 50S subunits, it traverses the body of the 30S subunit contacting proteins on the other side and probably holding the rRNA structure together. The combined cluster of proteins S8, S12 and S17 appears to hold together the shoulder and platform of the 30S subunit. This Streptomyces avermitilis (strain ATCC 31267 / DSM 46492 / JCM 5070 / NBRC 14893 / NCIMB 12804 / NRRL 8165 / MA-4680) protein is Small ribosomal subunit protein uS12 (rpsL).